A 752-amino-acid chain; its full sequence is MSNESKCPFHQTAGGGTTNRDWWPDQLNLRILHQHGTKSDPMDPDFDYAKAFKSLDFQALKQDLTALMTDSQDWWPADFGHYGPLFIRMAWHSAGTYRIGDGRGGAGSGQQRFAPLNSWPDNVSLDKARRLLWPIKQKYGNKISWADLIVLTGNVALESMGFKTFGFSGGRADVWEPDEDVYWGSEKVWLGGDTRYGKDQVKAQAPGQGDLVAEPAKHGEEQNRDLSAERNLENPLAAVQMGLIYVNPEGPEGNPDPVASGKDIRETFGRMAMNDEETVALIAGGHAFGKTHGAGPADNVGAEPEAAGLELQGLGWANKFGTGKGGDTITSGLEVTWTSTPTQWSNEYLNNLFNFEWELTKSPAGAHQWQPKEGKGAGTVPDAHDPSKRHAPSMLTSDLALRFDPIYEPIARRFKDNPDQLADAFARAWYKLIHRDMGPLARYLGPEMPNEELLWQDPLPKADQPLPSEQDIAALKTKVLASGLSVGELVSTAWAAASTFRGSDKRGGANGARLRLAPQKDWPANQGTGKVLAALEQIQGEFNNGGKHISLADLIVLAGTAAVEKAAKDAGYAGNVQFRPGRVDASQEQTDVESFAVLEPLADGFRNFTKARYSVKAEKLLLDKAQLLTLTAPELTVLIGGLRVLGANHGGSKHGVFTDQPGTLSNDFFRNLLDMGVEWKATSGDNESFEGRDRKTGQVKWTGTRVDLVFGSHAQLRALSEVYGSSDGKDKFVKDFVAAWVKVMELDRFDLK.

The interval 1–21 (MSNESKCPFHQTAGGGTTNRD) is disordered. The segment at residues 91–245 (WHSAGTYRIG…LAAVQMGLIY (155 aa)) is a cross-link (tryptophyl-tyrosyl-methioninium (Trp-Tyr) (with M-271)). The Proton acceptor role is filled by His92. The segment at 204-228 (QAPGQGDLVAEPAKHGEEQNRDLSA) is disordered. Basic and acidic residues predominate over residues 215–228 (PAKHGEEQNRDLSA). Residues 245–271 (YVNPEGPEGNPDPVASGKDIRETFGRM) constitute a cross-link (tryptophyl-tyrosyl-methioninium (Tyr-Met) (with W-91)). Heme is bound at residue His286. The disordered stretch occupies residues 366-391 (AHQWQPKEGKGAGTVPDAHDPSKRHA).

The protein belongs to the peroxidase family. Peroxidase/catalase subfamily. In terms of assembly, homodimer or homotetramer. It depends on heme b as a cofactor. In terms of processing, formation of the three residue Trp-Tyr-Met cross-link is important for the catalase, but not the peroxidase activity of the enzyme.

The catalysed reaction is H2O2 + AH2 = A + 2 H2O. It carries out the reaction 2 H2O2 = O2 + 2 H2O. Functionally, bifunctional enzyme with both catalase and broad-spectrum peroxidase activity. This Pseudomonas putida (strain W619) protein is Catalase-peroxidase.